The primary structure comprises 101 residues: Putative pterin-4-alpha-carbinolamine dehydratase (101 aa).

The protein belongs to the pterin-4-alpha-carbinolamine dehydratase family.

The catalysed reaction is (4aS,6R)-4a-hydroxy-L-erythro-5,6,7,8-tetrahydrobiopterin = (6R)-L-erythro-6,7-dihydrobiopterin + H2O. The polypeptide is Putative pterin-4-alpha-carbinolamine dehydratase (Nitrobacter winogradskyi (strain ATCC 25391 / DSM 10237 / CIP 104748 / NCIMB 11846 / Nb-255)).